Consider the following 406-residue polypeptide: Tyrosine-protein phosphatase non-receptor type 2 (406 aa).

The Tyrosine-protein phosphatase domain occupies 5-275; the sequence is IEREFEELDA…RFSYMAIIEG (271 aa). At tyrosine 22 the chain carries Phosphotyrosine. At serine 52 the chain carries Phosphoserine. Position 68 is a phosphotyrosine (tyrosine 68). Residues aspartate 182, 216–222, and glutamine 260 each bind substrate; that span reads CSAGIGR. The active-site Phosphocysteine intermediate is the cysteine 216. Cysteine 216 is modified (S-nitrosocysteine). Phosphoserine is present on residues serine 293, serine 298, serine 304, serine 320, and serine 339. Residues 341 to 406 are endoplasmic reticulum location; that stretch reads ESILRKRIRE…ALVGWTLLFH (66 aa). Positions 371 to 406 are mediates interaction with STX17; the sequence is ERKRKRWLYWQPILTKMGFVSVILVGALVGWTLLFH.

The protein belongs to the protein-tyrosine phosphatase family. Non-receptor class 1 subfamily. As to quaternary structure, interacts with RMDN3. Isoform 1 interacts with TMED9. Isoform 1 interacts with STX17; dephosphorylates STX17. Interacts with ITGA1 (via cytoplasmic domain); activates the phosphatase activity towards EGFR. Interacts with TRAF2; probably involved in tumor necrosis factor-mediated signaling. Interacts with MET. Interacts with FAM220A and STAT3; interaction with FAM220A promotes interaction of PTPN2 with transcriptional activator STAT3, leading to dephosphorylation of STAT3 by PTPN2 and negative regulation of STAT3 transcriptional activator activity. Post-translationally, specifically phosphorylated in a cell cycle-dependent manner by cyclin-dependent kinases CDK1 and CDK2. Probably activated through phosphorylation by PKR. As to expression, ubiquitously expressed. The highest expression levels were found in ovary, testis, thymus and kidney.

It localises to the endoplasmic reticulum. The protein resides in the endoplasmic reticulum-Golgi intermediate compartment. The protein localises to the nucleus. Its subcellular location is the cytoplasm. It is found in the cell membrane. It catalyses the reaction O-phospho-L-tyrosyl-[protein] + H2O = L-tyrosyl-[protein] + phosphate. In terms of biological role, non-receptor type tyrosine-specific phosphatase that dephosphorylates receptor protein tyrosine kinases including INSR, EGFR, CSF1R, PDGFR. Also dephosphorylates non-receptor protein tyrosine kinases like JAK1, JAK2, JAK3, Src family kinases, STAT1, STAT3 and STAT6 either in the nucleus or the cytoplasm. Negatively regulates numerous signaling pathways and biological processes like hematopoiesis, inflammatory response, cell proliferation and differentiation, and glucose homeostasis. Plays a multifaceted and important role in the development of the immune system. Functions in T-cell receptor signaling through dephosphorylation of FYN and LCK to control T-cells differentiation and activation. Dephosphorylates CSF1R, negatively regulating its downstream signaling and macrophage differentiation. Negatively regulates cytokine (IL2/interleukin-2 and interferon)-mediated signaling through dephosphorylation of the cytoplasmic kinases JAK1, JAK3 and their substrate STAT1, that propagate signaling downstream of the cytokine receptors. Also regulates the IL6/interleukin-6 and IL4/interleukin-4 cytokine signaling through dephosphorylation of STAT3 and STAT6 respectively. In addition to the immune system, it is involved in anchorage-dependent, negative regulation of EGF-stimulated cell growth. Activated by the integrin ITGA1/ITGB1, it dephosphorylates EGFR and negatively regulates EGF signaling. Dephosphorylates PDGFRB and negatively regulates platelet-derived growth factor receptor-beta signaling pathway and therefore cell proliferation. Negatively regulates tumor necrosis factor-mediated signaling downstream via MAPK through SRC dephosphorylation. May also regulate the hepatocyte growth factor receptor signaling pathway through dephosphorylation of the hepatocyte growth factor receptor MET. Also plays an important role in glucose homeostasis. For instance, negatively regulates the insulin receptor signaling pathway through the dephosphorylation of INSR and control gluconeogenesis and liver glucose production through negative regulation of the IL6 signaling pathways. May also bind DNA. The sequence is that of Tyrosine-protein phosphatase non-receptor type 2 (Ptpn2) from Mus musculus (Mouse).